Consider the following 610-residue polypeptide: Zinc finger protein 823 (610 aa).

A KRAB domain is found at 4-97 (VAFEDVAVNF…VNKNTPRVNP (94 aa)). C2H2-type zinc fingers lie at residues 164-186 (FDCKECAKTFSSLGNLRRHMAAH), 192-214 (YKCKLCGKAFVWPSLFHLHERTH), 220-242 (YECKQCSKAFPFYSSYLRHERIH), 248-270 (YECKQCSKAFPDYSTYLRHERTH), 276-298 (YKCTQCGKAFSCYYYTRLHERTH), 304-326 (YACKQCGKTFYHHTSFRRHMIRH), 332-354 (HKCKICGKGFDCPSSVRNHETTH), 360-382 (YECKQCGKVLSHSSSFRSHMITH), 388-410 (QKCKICGKAFGCPSLFQRHERTH), and 416-438 (YQCKQCGKAFSLAGSLRRHEATH). The segment at 444-465 (YKCQCGKAFSDLSSFQNHETTH) adopts a C2H2-type 11; atypical zinc-finger fold. 5 C2H2-type zinc fingers span residues 471 to 493 (YECKECGKAFSCFKYLSQHKRTH), 499 to 521 (YECKTCRKAFSHFSNLKVHERIH), 527 to 549 (YECKECGKAFSWLTCLLRHERIH), 555 to 577 (YECLQCGKAFTRSRFLRGHEKTH), and 583 to 605 (YECKECGKALSSLRSLHRHKRTH).

Belongs to the krueppel C2H2-type zinc-finger protein family.

The protein resides in the nucleus. Its function is as follows. May be involved in transcriptional regulation. This chain is Zinc finger protein 823 (ZNF823), found in Homo sapiens (Human).